The following is a 160-amino-acid chain: SsrA-binding protein (160 aa).

The interval 131–160 (KKEYDKRDTEKARDSDREIQRAIRSKGKED) is disordered.

It belongs to the SmpB family.

It localises to the cytoplasm. Its function is as follows. Required for rescue of stalled ribosomes mediated by trans-translation. Binds to transfer-messenger RNA (tmRNA), required for stable association of tmRNA with ribosomes. tmRNA and SmpB together mimic tRNA shape, replacing the anticodon stem-loop with SmpB. tmRNA is encoded by the ssrA gene; the 2 termini fold to resemble tRNA(Ala) and it encodes a 'tag peptide', a short internal open reading frame. During trans-translation Ala-aminoacylated tmRNA acts like a tRNA, entering the A-site of stalled ribosomes, displacing the stalled mRNA. The ribosome then switches to translate the ORF on the tmRNA; the nascent peptide is terminated with the 'tag peptide' encoded by the tmRNA and targeted for degradation. The ribosome is freed to recommence translation, which seems to be the essential function of trans-translation. This chain is SsrA-binding protein, found in Azotobacter vinelandii (strain DJ / ATCC BAA-1303).